Consider the following 323-residue polypeptide: tRNA dimethylallyltransferase (323 aa).

27–34 (GPTGSGKT) lines the ATP pocket. Substrate is bound at residue 29 to 34 (TGSGKT). Interaction with substrate tRNA regions lie at residues 52 to 55 (DSRQ) and 176 to 180 (QRIVR).

It belongs to the IPP transferase family. As to quaternary structure, monomer. It depends on Mg(2+) as a cofactor.

It catalyses the reaction adenosine(37) in tRNA + dimethylallyl diphosphate = N(6)-dimethylallyladenosine(37) in tRNA + diphosphate. In terms of biological role, catalyzes the transfer of a dimethylallyl group onto the adenine at position 37 in tRNAs that read codons beginning with uridine, leading to the formation of N6-(dimethylallyl)adenosine (i(6)A). The polypeptide is tRNA dimethylallyltransferase (Desulfovibrio desulfuricans (strain ATCC 27774 / DSM 6949 / MB)).